The following is a 327-amino-acid chain: Serine/threonine-protein phosphatase PP1-beta catalytic subunit (327 aa).

N-acetylalanine is present on alanine 2. Mn(2+)-binding residues include aspartate 63, histidine 65, aspartate 91, and asparagine 123. Histidine 124 functions as the Proton donor in the catalytic mechanism. Histidine 172 and histidine 247 together coordinate Mn(2+). The segment at 305–327 (QYGGLNSGRPVTPPRTANPPKKR) is disordered.

The protein belongs to the PPP phosphatase family. PP-1 subfamily. Requires Mn(2+) as cofactor.

The protein resides in the cytoplasm. It is found in the nucleus. The catalysed reaction is O-phospho-L-seryl-[protein] + H2O = L-seryl-[protein] + phosphate. It carries out the reaction O-phospho-L-threonyl-[protein] + H2O = L-threonyl-[protein] + phosphate. Functionally, protein phosphatase that associates with over 200 regulatory proteins to form highly specific holoenzymes which dephosphorylate hundreds of biological targets. Protein phosphatase (PP1) is essential for cell division, it participates in the regulation of glycogen metabolism, muscle contractility and protein synthesis. Involved in regulation of ionic conductances and long-term synaptic plasticity. The protein is Serine/threonine-protein phosphatase PP1-beta catalytic subunit (ppp1cb) of Xenopus laevis (African clawed frog).